Reading from the N-terminus, the 78-residue chain is uncharacterized protein (78 aa).

The interval 49–78 is disordered; that stretch reads QRASLERSNSIRNLQSQGKRRSDSKESRKL. Residues 54–65 are compositionally biased toward polar residues; sequence ERSNSIRNLQSQ. The span at 68–78 shows a compositional bias: basic and acidic residues; the sequence is RRSDSKESRKL.

This is an uncharacterized protein from Saccharomyces cerevisiae (strain ATCC 204508 / S288c) (Baker's yeast).